A 476-amino-acid polypeptide reads, in one-letter code: Aspartyl/glutamyl-tRNA(Asn/Gln) amidotransferase subunit B (476 aa).

Belongs to the GatB/GatE family. GatB subfamily. Heterotrimer of A, B and C subunits.

It catalyses the reaction L-glutamyl-tRNA(Gln) + L-glutamine + ATP + H2O = L-glutaminyl-tRNA(Gln) + L-glutamate + ADP + phosphate + H(+). It carries out the reaction L-aspartyl-tRNA(Asn) + L-glutamine + ATP + H2O = L-asparaginyl-tRNA(Asn) + L-glutamate + ADP + phosphate + 2 H(+). Allows the formation of correctly charged Asn-tRNA(Asn) or Gln-tRNA(Gln) through the transamidation of misacylated Asp-tRNA(Asn) or Glu-tRNA(Gln) in organisms which lack either or both of asparaginyl-tRNA or glutaminyl-tRNA synthetases. The reaction takes place in the presence of glutamine and ATP through an activated phospho-Asp-tRNA(Asn) or phospho-Glu-tRNA(Gln). The chain is Aspartyl/glutamyl-tRNA(Asn/Gln) amidotransferase subunit B from Laribacter hongkongensis (strain HLHK9).